A 1116-amino-acid chain; its full sequence is MAP kinase kinase kinase mkh1 (1116 aa).

Disordered stretches follow at residues 510–601 and 618–647; these read LKMP…SNSL and ALDE…ENHH. A compositionally biased stretch (low complexity) spans 515-531; sequence NSGSSAPQSPSSNTSAS. Basic residues predominate over residues 553–569; the sequence is LRRKNTLTRRPSIRHAR. The span at 588 to 601 shows a compositional bias: low complexity; sequence SFDPKASSKSSNSL. A compositionally biased stretch (polar residues) spans 634–647; that stretch reads PKQSSSQVPKENHH. The 270-residue stretch at 825-1094 folds into the Protein kinase domain; that stretch reads WMKGELIGNG…AEELLNHPFM (270 aa). ATP-binding positions include 831-839 and lysine 854; that span reads IGNGTYGKV. The active-site Proton acceptor is aspartate 955.

The protein belongs to the protein kinase superfamily. STE Ser/Thr protein kinase family. MAP kinase kinase kinase subfamily.

The catalysed reaction is L-seryl-[protein] + ATP = O-phospho-L-seryl-[protein] + ADP + H(+). It carries out the reaction L-threonyl-[protein] + ATP = O-phospho-L-threonyl-[protein] + ADP + H(+). May regulate cell morphology, cell wall integrity, salt resistance, cell cycle reentry from stationary-phase arrest, and filamentous growth in response to stress. Activates the MAP kinase kinase skh1/pek1 by phosphorylation. In Schizosaccharomyces pombe (strain 972 / ATCC 24843) (Fission yeast), this protein is MAP kinase kinase kinase mkh1 (mkh1).